A 276-amino-acid polypeptide reads, in one-letter code: Ribosomal RNA small subunit methyltransferase A (276 aa).

6 residues coordinate S-adenosyl-L-methionine: N27, L29, G54, E75, D101, and N123.

The protein belongs to the class I-like SAM-binding methyltransferase superfamily. rRNA adenine N(6)-methyltransferase family. RsmA subfamily.

It localises to the cytoplasm. The enzyme catalyses adenosine(1518)/adenosine(1519) in 16S rRNA + 4 S-adenosyl-L-methionine = N(6)-dimethyladenosine(1518)/N(6)-dimethyladenosine(1519) in 16S rRNA + 4 S-adenosyl-L-homocysteine + 4 H(+). Functionally, specifically dimethylates two adjacent adenosines (A1518 and A1519) in the loop of a conserved hairpin near the 3'-end of 16S rRNA in the 30S particle. May play a critical role in biogenesis of 30S subunits. This Bartonella tribocorum (strain CIP 105476 / IBS 506) protein is Ribosomal RNA small subunit methyltransferase A.